The following is a 471-amino-acid chain: PTS system mannitol-specific EIICB component (471 aa).

The Cytoplasmic segment spans residues 1–29 (MTHTSENQAGFRVKIQRFGSYLSGMIMPN). Residues 18–342 (FGSYLSGMIM…FFVASIFLKS (325 aa)) form the PTS EIIC type-2 domain. The helical transmembrane segment at 30-51 (IGAFIAWGIITALFIPTGWLPN) threads the bilayer. Residues 52-55 (ETFA) are Extracellular-facing. Residues 56 to 76 (KLVGPMITYLLPLLIGYTGGK) form a helical membrane-spanning segment. The Cytoplasmic portion of the chain corresponds to 77–139 (MIYDVRGGVV…QGFEMLVNNF (63 aa)). Residues 140-161 (SAGIIGGLLTLAAFKGVGPVVS) form a helical membrane-spanning segment. Residues 162–170 (AISKTLAAG) lie on the Extracellular side of the membrane. A helical membrane pass occupies residues 171 to 191 (VEKIVDLHLLPLANIFIEPGK). At 192-278 (VLFLNNAINH…VLMRPILILA (87 aa)) the chain is on the cytoplasmic side. A helical membrane pass occupies residues 279 to 298 (AIAGGVSGVLTFTIFDAGLV). Over 299-318 (AVPSPGSIFALLAMTPKGNY) the chain is Extracellular. The helical transmembrane segment at 319–340 (LGVLAGVLVATAVSFFVASIFL) threads the bilayer. The Cytoplasmic portion of the chain corresponds to 341-471 (KSAKNNEEDI…YDELIEMLKK (131 aa)). The 89-residue stretch at 383–471 (KKIVFACDAG…YDELIEMLKK (89 aa)) folds into the PTS EIIB type-2 domain. The Phosphocysteine intermediate; for EIIB activity role is filled by Cys-389. Phosphocysteine; by EIIA is present on Cys-389.

In terms of assembly, homodimer.

It localises to the cell membrane. The catalysed reaction is D-mannitol(out) + N(pros)-phospho-L-histidyl-[protein] = D-mannitol 1-phosphate(in) + L-histidyl-[protein]. The phosphoenolpyruvate-dependent sugar phosphotransferase system (sugar PTS), a major carbohydrate active transport system, catalyzes the phosphorylation of incoming sugar substrates concomitantly with their translocation across the cell membrane. The enzyme II CmtAB PTS system is involved in D-mannitol transport. The protein is PTS system mannitol-specific EIICB component of Geobacillus stearothermophilus (Bacillus stearothermophilus).